Consider the following 1735-residue polypeptide: Glutamine and serine-rich protein 1 (1735 aa).

Met-1 is subject to N-acetylmethionine. Polar residues predominate over residues 267–297; the sequence is AIPSSGYPPSTTKIKSCSTEQPLTSTKTPKP. 4 disordered regions span residues 267 to 301, 414 to 440, 479 to 518, and 533 to 561; these read AIPS…QSII, TRDL…VSQT, SRAQ…FLPA, and LQNN…SKQE. Residues 417 to 440 show a composition bias toward low complexity; the sequence is LSSVSQSQSYSSGHSQGLSPVSQT. Phosphoserine occurs at positions 586, 615, and 886. The residue at position 949 (Thr-949) is a Phosphothreonine. The interval 964–1033 is disordered; sequence GPSHEVQEQS…EFTLGGDDSG (70 aa). A compositionally biased stretch (polar residues) spans 971 to 985; that stretch reads EQSSGPFKKQSATNL. Residue Ser-987 is modified to Phosphoserine. The segment covering 997–1024 has biased composition (polar residues); that stretch reads STLNNNRNQEFVSSSRSISGENATSESE. Residues Lys-1058 and Lys-1083 each participate in a glycyl lysine isopeptide (Lys-Gly) (interchain with G-Cter in SUMO2) cross-link. 2 disordered regions span residues 1073–1132 and 1178–1217; these read KKRA…EKMR and RPGT…DKVD. The span at 1120–1132 shows a compositional bias: basic and acidic residues; the sequence is SCHDGYQHQEKMR. Phosphoserine is present on residues Ser-1211, Ser-1230, Ser-1231, and Ser-1239. Residues 1256–1286 form a disordered region; sequence TSDKKKKTEALQVATTSPTANTTGTATTSST. The span at 1269–1286 shows a compositional bias: low complexity; the sequence is ATTSPTANTTGTATTSST. Residue Thr-1341 is modified to Phosphothreonine. Ser-1348 is modified (phosphoserine). The tract at residues 1441–1532 is disordered; that stretch reads VCSKKPRNKP…SSDDEEFEPP (92 aa). Polar residues predominate over residues 1449-1478; the sequence is KPSQTIRTVQAKPSSSSKTSDPLASKTTTT. The segment covering 1492-1508 has biased composition (basic and acidic residues); it reads VKAEPPPKKRKKWKEEF.

In terms of assembly, interacts with TET1.

It is found in the chromosome. Its function is as follows. Plays an essential role in the protection and maintenance of transcriptional and developmental programs. Protects many bivalent promoters and poised enhancers from hypermethylation, showing a marked preference for these regulatory elements over other types of promoters or enhancers. Mechanistically, cooperates with TET1 and binds to DNA in a common complex to inhibit the binding of DNMT3A/3B and therefore de novo methylation. The sequence is that of Glutamine and serine-rich protein 1 (QSER1) from Homo sapiens (Human).